The following is a 904-amino-acid chain: Essential for maintenance of the cell wall protein 1 (904 aa).

TPR repeat units lie at residues Trp-510–Leu-544, Ile-563–Val-596, Ala-603–Ser-636, Phe-637–His-670, Ala-671–Lys-704, and Trp-706–Lys-739.

The protein belongs to the TTC27 family.

The protein localises to the cytoplasm. Its subcellular location is the nucleus. Functionally, required for the maintenance of the cell wall integrity. The sequence is that of Essential for maintenance of the cell wall protein 1 (EMW1) from Saccharomyces cerevisiae (strain ATCC 204508 / S288c) (Baker's yeast).